We begin with the raw amino-acid sequence, 65 residues long: Large ribosomal subunit protein bL35 (65 aa).

A disordered region spans residues 1-25 (MPKMKSHRGAAKRFKKTGTGKLKRA).

This sequence belongs to the bacterial ribosomal protein bL35 family.

This chain is Large ribosomal subunit protein bL35, found in Clostridium botulinum (strain Alaska E43 / Type E3).